Here is a 416-residue protein sequence, read N- to C-terminus: Probable protein phosphatase 2C 49 (416 aa).

The region spanning 91-411 is the PPM-type phosphatase domain; it reads RYGVTSVFGR…DNVSVVVVDL (321 aa). Mn(2+) contacts are provided by Asp-131, Gly-132, and Asp-319. Positions 343-360 are enriched in pro residues; that stretch reads PPSPPGCSRPKAVLPPPA. Positions 343–368 are disordered; the sequence is PPSPPGCSRPKAVLPPPAGASGGGGG. Position 402 (Asp-402) interacts with Mn(2+).

This sequence belongs to the PP2C family. Mg(2+) serves as cofactor. It depends on Mn(2+) as a cofactor.

It catalyses the reaction O-phospho-L-seryl-[protein] + H2O = L-seryl-[protein] + phosphate. The enzyme catalyses O-phospho-L-threonyl-[protein] + H2O = L-threonyl-[protein] + phosphate. The chain is Probable protein phosphatase 2C 49 from Oryza sativa subsp. japonica (Rice).